Here is a 561-residue protein sequence, read N- to C-terminus: Putative transport protein KPN78578_08530 (561 aa).

5 helical membrane passes run 8-28 (LLNGNYILLLFVVLALGLCLG), 37-57 (LGNSIGVLVVSLLLGQQHFAI), 66-86 (FMLFIFCVGVEAGPNFFSIFF), 94-114 (MLALVMVGSAMLIAMVLGKVF), and 158-178 (HLSLGYALTYLVGLVSLIVGA). 2 consecutive RCK C-terminal domains span residues 202–288 (LDTD…SFRN) and 292–373 (VFDR…RIGF). A run of 5 helical transmembrane segments spans residues 383-403 (LLAFCAFFIVGLMIGMITFQF), 406-426 (FSFGIGNAAGLLFAGIMLGFL), 447-467 (FGLMVFMAGVGLSAGAGINNG), 478-498 (AGLIVSLVPVVICFLFGAYVL), and 540-560 (AIANVLLTLAGTLIVIIWPGL).

It belongs to the AAE transporter (TC 2.A.81) family. YbjL subfamily.

It localises to the cell membrane. This is Putative transport protein KPN78578_08530 from Klebsiella pneumoniae subsp. pneumoniae (strain ATCC 700721 / MGH 78578).